The primary structure comprises 251 residues: Ribosomal RNA small subunit methyltransferase J (251 aa).

Residues 100 to 101 (RD), 116 to 117 (ER), and D170 each bind S-adenosyl-L-methionine.

It belongs to the methyltransferase superfamily. RsmJ family.

It localises to the cytoplasm. It catalyses the reaction guanosine(1516) in 16S rRNA + S-adenosyl-L-methionine = N(2)-methylguanosine(1516) in 16S rRNA + S-adenosyl-L-homocysteine + H(+). In terms of biological role, specifically methylates the guanosine in position 1516 of 16S rRNA. The chain is Ribosomal RNA small subunit methyltransferase J from Actinobacillus pleuropneumoniae serotype 3 (strain JL03).